We begin with the raw amino-acid sequence, 664 residues long: Peroxisomal acyl-coenzyme A oxidase 1 (664 aa).

FAD is bound by residues tyrosine 135, glutamine 137, threonine 138, serine 144, glycine 177, arginine 310, glutamine 330, arginine 333, glycine 401, and threonine 422. Glutamate 424 functions as the Proton acceptor in the catalytic mechanism. Residue aspartate 426 coordinates FAD. Cysteine 467 and cysteine 576 are oxidised to a cystine. The Microbody targeting signal signature appears at 662–664 (ARL).

It belongs to the acyl-CoA oxidase family. In terms of assembly, homodimer. The cofactor is FAD. As to expression, expressed mainly in flowers and young seedlings. Lower expression in roots, leaves and bracts.

The protein resides in the peroxisome. It carries out the reaction a 2,3-saturated acyl-CoA + O2 = a (2E)-enoyl-CoA + H2O2. In terms of biological role, catalyzes the desaturation of both long- and medium-chain acyl-CoAs to 2-trans-enoyl-CoAs. Most active with C14-CoA. Activity on long-chain mono-unsaturated substrates is 40% higher than with the corresponding saturated substrates. Seems to be an important factor in the general metabolism of root tips. May be involved in the biosynthesis of jasmonic acid. This chain is Peroxisomal acyl-coenzyme A oxidase 1, found in Arabidopsis thaliana (Mouse-ear cress).